The sequence spans 645 residues: Exoribonuclease 2 (645 aa).

Residues 191–517 (REDLTELNFI…MNHRLLKALI (327 aa)) enclose the RNB domain. An S1 motif domain is found at 563–645 (HIRYSAEIID…DNRSIIAKIV (83 aa)).

The protein belongs to the RNR ribonuclease family. RNase II subfamily.

It localises to the cytoplasm. It catalyses the reaction Exonucleolytic cleavage in the 3'- to 5'-direction to yield nucleoside 5'-phosphates.. Involved in mRNA degradation. Hydrolyzes single-stranded polyribonucleotides processively in the 3' to 5' direction. In Baumannia cicadellinicola subsp. Homalodisca coagulata, this protein is Exoribonuclease 2.